The primary structure comprises 331 residues: MEIINGPVLPRYAAPATGALTSDAKISGQLLRRVHLRRRACGLQGDHYRAARRFFGFPSERHARSGWVWPVYCSYGSSSDGDGAAAADYDASGEEFVNSSVMEAVELRSVSDGFVIKMRDGKNLRCVQNNPRVLRLRDSAPHHAIVLKMEDGSDLLLPIIVMETPSIMLLAALRNIRIPRPTIYNVVKEMTERMGYAVRLVRITEMVHDAYYSRLYLAKIGNEEETISLDLKPSDAINIAFRCKVPIQVNRRIAYNNGLKVVQPTPSESYVSSDQFQYTRLDRPDDQPCFEAQEFDLVRNMLVAAVEERYKDAAQYRDQLFMFRAKKKNMI.

Residues Cys126–Val261 enclose the BFN domain. One can recognise a UVR domain in the interval Glu291 to Lys326.

It belongs to the bifunctional nuclease family.

The protein localises to the nucleus. Bifunctional nuclease with both RNase and DNase activities. Involved in basal defense response. Participates in abscisic acid-derived callose deposition following infection by a necrotrophic pathogen. The polypeptide is Bifunctional nuclease (BBD) (Oryza minuta).